A 412-amino-acid chain; its full sequence is Na(+)-translocating NADH-quinone reductase subunit B (412 aa).

Helical transmembrane passes span 57 to 77 (MILVWFAVFPAMFWGMYNVGL), 127 to 147 (VFFLPIYITVFIVGGFWEVLF), and 163 to 183 (SILFALIVPPTLPLWQAALGI). Thr-236 is subject to FMN phosphoryl threonine. 5 helical membrane passes run 270–290 (GSIGEVSTLMIFIGGAIILFG), 297–317 (IVAGVMIGMIATATLFNVIGS), 322–342 (MFAMPWYWHLVLGGFAFGMMF), 358–378 (WSYGVLIGVMCVLIRVVNPAY), and 381–401 (GMMLAILFANLFAPLFDYLVV).

This sequence belongs to the NqrB/RnfD family. In terms of assembly, composed of six subunits; NqrA, NqrB, NqrC, NqrD, NqrE and NqrF. The cofactor is FMN.

Its subcellular location is the cell inner membrane. The enzyme catalyses a ubiquinone + n Na(+)(in) + NADH + H(+) = a ubiquinol + n Na(+)(out) + NAD(+). In terms of biological role, NQR complex catalyzes the reduction of ubiquinone-1 to ubiquinol by two successive reactions, coupled with the transport of Na(+) ions from the cytoplasm to the periplasm. NqrA to NqrE are probably involved in the second step, the conversion of ubisemiquinone to ubiquinol. The protein is Na(+)-translocating NADH-quinone reductase subunit B of Klebsiella pneumoniae subsp. pneumoniae (strain ATCC 700721 / MGH 78578).